The sequence spans 290 residues: Thioredoxin-like protein 1 (290 aa).

Residues 24 to 104 (VDCYADWCGP…PQALKEKVAL (81 aa)) enclose the Thioredoxin domain. C31 and C34 form a disulfide bridge. The PITH domain occupies 118 to 290 (SSSAPVKGFA…SKGKLQKVEA (173 aa)).

The protein localises to the cytoplasm. It localises to the nucleus. Has a role in cellular detoxification of alkyl hydroperoxide. In Schizosaccharomyces pombe (strain 972 / ATCC 24843) (Fission yeast), this protein is Thioredoxin-like protein 1 (txl1).